The chain runs to 467 residues: MSANTFIHDNFLLENKYAEELYHNYSKNQPIIDYHNHLNPQFIAEDKIFDNITNVWINGDHYKWRAMRTLGIDEQFVTGNGSDKDKFLNWAKTVPYTMRNPLYHWTHLELARYFDIYDLLNEKSAEKIYTETTEKINSQAYSTQNLLKKVNAELVCTTEDPIDSLEFHKKFANNSTGIKMSTAFRPDKAILIANDGYNAYLDTLGDVSGVAINTFADLQAALRNRIEFFNANGCKLSDHGLDQIYFEDFTESEISSIFKKKRENRIITPEEALKFQSAVLIFLSETYHEFGWVQQFHLGALRNNNARMHRILGPDTGWDSIGDYPQAQKLSSFLNALDSKDKLTKTIIYNLNPADNEVMATMIGNFNDGSVRGKVQFGSGWWFLDQKDGMTKQLNALSNMGLISCFVGMLTDSRSFLSFPRHEYFRRILCNLLGDEIKRGELPNDMEWIGKLVADISYNNAKEYFKF.

It belongs to the metallo-dependent hydrolases superfamily. Uronate isomerase family.

It carries out the reaction D-glucuronate = D-fructuronate. It catalyses the reaction aldehydo-D-galacturonate = keto-D-tagaturonate. It participates in carbohydrate metabolism; pentose and glucuronate interconversion. The protein is Uronate isomerase of Flavobacterium johnsoniae (strain ATCC 17061 / DSM 2064 / JCM 8514 / BCRC 14874 / CCUG 350202 / NBRC 14942 / NCIMB 11054 / UW101) (Cytophaga johnsonae).